A 98-amino-acid polypeptide reads, in one-letter code: NADH-ubiquinone oxidoreductase chain 4L (98 aa).

3 helical membrane-spanning segments follow: residues 1 to 21 (MSMVYANIFLAFIMSLMGLLM), 29 to 49 (SLLCLEGMMLSLFVMMTVTIL), and 61 to 81 (IILLVFAACEAALGLSLLVMV).

The protein belongs to the complex I subunit 4L family. As to quaternary structure, core subunit of respiratory chain NADH dehydrogenase (Complex I) which is composed of 45 different subunits.

The protein localises to the mitochondrion inner membrane. It catalyses the reaction a ubiquinone + NADH + 5 H(+)(in) = a ubiquinol + NAD(+) + 4 H(+)(out). In terms of biological role, core subunit of the mitochondrial membrane respiratory chain NADH dehydrogenase (Complex I) which catalyzes electron transfer from NADH through the respiratory chain, using ubiquinone as an electron acceptor. Part of the enzyme membrane arm which is embedded in the lipid bilayer and involved in proton translocation. This Erignathus barbatus (Bearded seal) protein is NADH-ubiquinone oxidoreductase chain 4L (MT-ND4L).